The sequence spans 287 residues: Large ribosomal subunit protein uL2 (287 aa).

Positions 221–287 (RGSVMNPCDH…SKRSRGGRDS (67 aa)) are disordered. Over residues 258 to 287 (KTRKRNKPSNRFVLRKRRRVSKRSRGGRDS) the composition is skewed to basic residues.

Belongs to the universal ribosomal protein uL2 family. As to quaternary structure, part of the 50S ribosomal subunit. Forms a bridge to the 30S subunit in the 70S ribosome.

Functionally, one of the primary rRNA binding proteins. Required for association of the 30S and 50S subunits to form the 70S ribosome, for tRNA binding and peptide bond formation. It has been suggested to have peptidyltransferase activity; this is somewhat controversial. Makes several contacts with the 16S rRNA in the 70S ribosome. In Prochlorococcus marinus (strain MIT 9211), this protein is Large ribosomal subunit protein uL2.